Here is a 321-residue protein sequence, read N- to C-terminus: GTP cyclohydrolase FolE2 (321 aa).

Belongs to the GTP cyclohydrolase IV family.

The enzyme catalyses GTP + H2O = 7,8-dihydroneopterin 3'-triphosphate + formate + H(+). It functions in the pathway cofactor biosynthesis; 7,8-dihydroneopterin triphosphate biosynthesis; 7,8-dihydroneopterin triphosphate from GTP: step 1/1. In terms of biological role, converts GTP to 7,8-dihydroneopterin triphosphate. The protein is GTP cyclohydrolase FolE2 of Paracoccus denitrificans (strain Pd 1222).